The chain runs to 311 residues: Aspartate carbamoyltransferase catalytic subunit (311 aa).

Carbamoyl phosphate contacts are provided by R58 and T59. K86 lines the L-aspartate pocket. Positions 108, 136, and 139 each coordinate carbamoyl phosphate. Positions 169 and 223 each coordinate L-aspartate. Residues G264 and P265 each coordinate carbamoyl phosphate.

Belongs to the aspartate/ornithine carbamoyltransferase superfamily. ATCase family. As to quaternary structure, heterododecamer (2C3:3R2) of six catalytic PyrB chains organized as two trimers (C3), and six regulatory PyrI chains organized as three dimers (R2).

It catalyses the reaction carbamoyl phosphate + L-aspartate = N-carbamoyl-L-aspartate + phosphate + H(+). The protein operates within pyrimidine metabolism; UMP biosynthesis via de novo pathway; (S)-dihydroorotate from bicarbonate: step 2/3. In terms of biological role, catalyzes the condensation of carbamoyl phosphate and aspartate to form carbamoyl aspartate and inorganic phosphate, the committed step in the de novo pyrimidine nucleotide biosynthesis pathway. This is Aspartate carbamoyltransferase catalytic subunit from Pelodictyon phaeoclathratiforme (strain DSM 5477 / BU-1).